Consider the following 389-residue polypeptide: Type 2 DNA topoisomerase 6 subunit A (389 aa).

A Topo IIA-type catalytic domain is found at 12–162 (EARRKAANIL…MLILSKEKGK (151 aa)). Tyr-106 acts as the O-(5'-phospho-DNA)-tyrosine intermediate in catalysis. Residues Glu-209 and Asp-261 each contribute to the Mg(2+) site.

Belongs to the TOP6A family. Homodimer. Heterotetramer of two Top6A and two Top6B chains. Requires Mg(2+) as cofactor.

The enzyme catalyses ATP-dependent breakage, passage and rejoining of double-stranded DNA.. Its activity is regulated as follows. Not inhibited by the DNA gyrase inhibitor novobiocin, instead inhibited by eukaryotic topoisomerase inhibitors such as m- and o-amsacrine, ellipticine, and the quinolone CP-115,953. In terms of biological role, relaxes both positive and negative supercoils and exhibits a strong decatenase and unknotting activity; it cannot introduce DNA supercoils. ATP is absolutely required for DNA cleavage; the nonhydrolyzable analog AMP-PNP generates nicked or linear products from a supercoiled dsDNA substrate. Generates staggered two-nucleotide long 5' overhangs. The enzyme is covalently attached transiently to the 5'-ends of the cleaved strands. This Saccharolobus shibatae (strain ATCC 51178 / DSM 5389 / JCM 8931 / NBRC 15437 / B12) (Sulfolobus shibatae) protein is Type 2 DNA topoisomerase 6 subunit A.